We begin with the raw amino-acid sequence, 324 residues long: Glyoxylate/hydroxypyruvate reductase B (324 aa).

Residues arginine 237 and glutamate 266 contribute to the active site. Histidine 285 (proton donor) is an active-site residue.

It belongs to the D-isomer specific 2-hydroxyacid dehydrogenase family. GhrB subfamily. As to quaternary structure, homodimer.

It is found in the cytoplasm. The catalysed reaction is glycolate + NADP(+) = glyoxylate + NADPH + H(+). It carries out the reaction (R)-glycerate + NAD(+) = 3-hydroxypyruvate + NADH + H(+). It catalyses the reaction (R)-glycerate + NADP(+) = 3-hydroxypyruvate + NADPH + H(+). Functionally, catalyzes the NADPH-dependent reduction of glyoxylate and hydroxypyruvate into glycolate and glycerate, respectively. This Shigella boydii serotype 18 (strain CDC 3083-94 / BS512) protein is Glyoxylate/hydroxypyruvate reductase B.